The chain runs to 1043 residues: Ras guanine nucleotide exchange factor S (1043 aa).

A coiled-coil region spans residues 109–142 (IETLQTQRRQSTLNIQALQINNELQQQLQQQQQL). Low complexity-rich tracts occupy residues 135–145 (QLQQQQQLPPI), 245–258 (LSPLLNGGASGLSS), 266–281 (SKNQLNSSSGSNNSSS), and 293–307 (NNNNSSGNQSASNSS). Disordered regions lie at residues 135 to 160 (QLQQQQQLPPIDQLPPPPTSTSTSTI) and 245 to 316 (LSPL…HQSQ). A coiled-coil region spans residues 404–434 (LAVSLQNVEGLQNIAENLEDETLNLLDLVNE). An N-terminal Ras-GEF domain is found at 645-768 (KDGSILKVTL…LLRGLLDKMI (124 aa)). Positions 803 to 1043 (SAQSIAQQLT…YDLSIALEPK (241 aa)) constitute a Ras-GEF domain.

Functionally, promotes the exchange of Ras-bound GDP by GTP. The polypeptide is Ras guanine nucleotide exchange factor S (gefS) (Dictyostelium discoideum (Social amoeba)).